Consider the following 635-residue polypeptide: GTPase-GDP dissociation stimulator vimar (635 aa).

4 ARM repeats span residues 72–118, 346–391, 392–432, and 510–550; these read KSEV…NICY, TDSH…NLVI, PKPN…MTVD, and RSSL…ILSV.

As to quaternary structure, interacts with Miro.

Its subcellular location is the endoplasmic reticulum. It is found in the mitochondrion. It localises to the cytoplasm. The protein localises to the cytosol. In terms of biological role, probably acts as a GEF (guanine nucleotide exchange factor) for the Rho family of small GTP-binding proteins (G proteins) that stimulates the dissociation of GDP to enable subsequent binding of GTP. May also chaperone the processing and/or trafficking of small GTPases independently of GEF activity. By interacting with Miro, promotes mitochondrial fission in response to high calcium concentrations. This Drosophila melanogaster (Fruit fly) protein is GTPase-GDP dissociation stimulator vimar.